Here is a 285-residue protein sequence, read N- to C-terminus: Ribosomal RNA small subunit methyltransferase A (285 aa).

6 residues coordinate S-adenosyl-L-methionine: Asn-29, Leu-31, Gly-56, Glu-77, Asp-102, and Asn-123.

This sequence belongs to the class I-like SAM-binding methyltransferase superfamily. rRNA adenine N(6)-methyltransferase family. RsmA subfamily.

The protein localises to the cytoplasm. The enzyme catalyses adenosine(1518)/adenosine(1519) in 16S rRNA + 4 S-adenosyl-L-methionine = N(6)-dimethyladenosine(1518)/N(6)-dimethyladenosine(1519) in 16S rRNA + 4 S-adenosyl-L-homocysteine + 4 H(+). Specifically dimethylates two adjacent adenosines (A1518 and A1519) in the loop of a conserved hairpin near the 3'-end of 16S rRNA in the 30S particle. May play a critical role in biogenesis of 30S subunits. The sequence is that of Ribosomal RNA small subunit methyltransferase A from Clostridium perfringens (strain ATCC 13124 / DSM 756 / JCM 1290 / NCIMB 6125 / NCTC 8237 / Type A).